A 941-amino-acid polypeptide reads, in one-letter code: Protocadherin alpha-12 (941 aa).

The N-terminal stretch at 1-29 (MVIIGPRGPGSQRLLLSLLLLAAWEVGSG) is a signal peptide. Cadherin domains are found at residues 30–133 (QLHY…PPVF), 134–242 (RERE…GPAF), 243–350 (DKPS…VPEV), 351–455 (MVTS…APAF), 456–565 (AQPE…APAL), and 581–678 (VPRS…APKT). Over 30-697 (QLHYSVYEEA…DPEAALVDIN (668 aa)) the chain is Extracellular. Asn257 and Asn265 each carry an N-linked (GlcNAc...) asparagine glycan. A glycan (N-linked (GlcNAc...) asparagine) is linked at Asn548. Residues 698-718 (VYLIIAICAVSSLLVLTLLLY) traverse the membrane as a helical segment. Over 719–941 (TALRCSAPPT…GNSTTDNSDQ (223 aa)) the chain is Cytoplasmic. PXXP repeat units lie at residues 734 to 737 (PGKP), 790 to 793 (PRQP), 823 to 826 (PGGP), 863 to 866 (GPGN), and 882 to 885 (PGSP). A 5 X 4 AA repeats of P-X-X-P region spans residues 734–885 (PGKPTLVCSS…PDKFIIPGSP (152 aa)). The segment at 818–941 (ILRAGPGGPD…GNSTTDNSDQ (124 aa)) is disordered. Basic and acidic residues predominate over residues 900-914 (DKSDFITFGKKEETK).

It is found in the cell membrane. In terms of biological role, potential calcium-dependent cell-adhesion protein. May be involved in the establishment and maintenance of specific neuronal connections in the brain. This is Protocadherin alpha-12 (PCDHA12) from Homo sapiens (Human).